The sequence spans 230 residues: MPGLRPLLSPPASEALLLAQAQQLSGYSLGELAALAGLVAPKDLKRDKGWIGVLLEIWLGASAGSKPEQDFAALGVELKTIPVDSLGHPLETTFVCVAPLTGNSGVTWETSHVRHKLKRVLWVPVEGDRSIPLADRRVGSPLLWSPNEEEDQQLRLDWEELMDMIVLGQVERITARHGEFLQLRPKAANAKALTEAIGAQGETILTLPRGFYLKKNFTRTLLARHFLLQG.

Belongs to the MutH family.

The protein localises to the cytoplasm. Sequence-specific endonuclease that cleaves unmethylated GATC sequences. It is involved in DNA mismatch repair. This is DNA mismatch repair protein MutH from Citrobacter koseri (strain ATCC BAA-895 / CDC 4225-83 / SGSC4696).